An 83-amino-acid chain; its full sequence is Small ribosomal subunit protein eS21 (83 aa).

Belongs to the eukaryotic ribosomal protein eS21 family. As to quaternary structure, component of the 40S small ribosomal subunit. Interacts with sta.

Its subcellular location is the cytoplasm. It localises to the cytosol. The protein resides in the rough endoplasmic reticulum. The sequence is that of Small ribosomal subunit protein eS21 (RpS21) from Ceratitis capitata (Mediterranean fruit fly).